Here is a 611-residue protein sequence, read N- to C-terminus: Zinc metalloproteinase-disintegrin-like ohanin (611 aa).

Positions 1 to 20 (MIQVLLVTICLVVFPYQGSS) are cleaved as a signal peptide. Positions 21 to 187 (IILESGKVND…WESDEPIEKI (167 aa)) are excised as a propeptide. Residues 198–393 (KYLELYIVAD…DTPQCLINKP (196 aa)) enclose the Peptidase M12B domain. N-linked (GlcNAc...) asparagine glycosylation is found at Asn217 and Asn260. Cystine bridges form between Cys307–Cys388, Cys347–Cys372, and Cys349–Cys354. A Zn(2+)-binding site is contributed by His332. Glu333 is a catalytic residue. His336 and His342 together coordinate Zn(2+). An N-linked (GlcNAc...) asparagine glycan is attached at Asn395. One can recognise a Disintegrin domain in the interval 401 to 487 (NAVCGNYVEE…ECPMDRFHKN (87 aa)). Intrachain disulfides connect Cys404/Cys433, Cys415/Cys428, Cys417/Cys423, Cys427/Cys450, Cys441/Cys447, Cys446/Cys472, Cys459/Cys479, Cys466/Cys498, Cys491/Cys503, Cys510/Cys560, Cys525/Cys578, Cys538/Cys548, Cys555/Cys603, and Cys597/Cys608. Residues 465 to 467 (ECD) carry the D/ECD-tripeptide motif. The N-linked (GlcNAc...) asparagine glycan is linked to Asn528.

This sequence belongs to the venom metalloproteinase (M12B) family. P-III subfamily. P-IIIa sub-subfamily. Monomer. The cofactor is Zn(2+). As to expression, expressed by the venom gland.

The protein resides in the secreted. With respect to regulation, inhibited by EDTA, but not by PMSF. Snake venom zinc metalloproteinase that has hemorrhagic activity. Inhibits ADP-, TMVA- and stejnulxin-induced platelet aggregation in a dose-dependent manner (on washed platelet, but not on platelet rich plasm). Also specifically degrades alpha-chain of fibrinogen (FGA). The chain is Zinc metalloproteinase-disintegrin-like ohanin from Ophiophagus hannah (King cobra).